A 301-amino-acid chain; its full sequence is Glycine--tRNA ligase alpha subunit (301 aa).

This sequence belongs to the class-II aminoacyl-tRNA synthetase family. Tetramer of two alpha and two beta subunits.

Its subcellular location is the cytoplasm. The enzyme catalyses tRNA(Gly) + glycine + ATP = glycyl-tRNA(Gly) + AMP + diphosphate. The protein is Glycine--tRNA ligase alpha subunit of Actinobacillus pleuropneumoniae serotype 5b (strain L20).